A 155-amino-acid chain; its full sequence is NADPH-dependent 7-cyano-7-deazaguanine reductase (155 aa).

C52 functions as the Thioimide intermediate in the catalytic mechanism. Catalysis depends on D59, which acts as the Proton donor. Residues 74–76 and 93–94 each bind substrate; these read VES and HE.

The protein belongs to the GTP cyclohydrolase I family. QueF type 1 subfamily.

The protein localises to the cytoplasm. It carries out the reaction 7-aminomethyl-7-carbaguanine + 2 NADP(+) = 7-cyano-7-deazaguanine + 2 NADPH + 3 H(+). The protein operates within tRNA modification; tRNA-queuosine biosynthesis. Its function is as follows. Catalyzes the NADPH-dependent reduction of 7-cyano-7-deazaguanine (preQ0) to 7-aminomethyl-7-deazaguanine (preQ1). This is NADPH-dependent 7-cyano-7-deazaguanine reductase from Syntrophobacter fumaroxidans (strain DSM 10017 / MPOB).